Here is an 872-residue protein sequence, read N- to C-terminus: Alanine--tRNA ligase (872 aa).

Zn(2+) is bound by residues His-567, His-571, Cys-669, and His-673.

This sequence belongs to the class-II aminoacyl-tRNA synthetase family. Requires Zn(2+) as cofactor.

The protein localises to the cytoplasm. The enzyme catalyses tRNA(Ala) + L-alanine + ATP = L-alanyl-tRNA(Ala) + AMP + diphosphate. Functionally, catalyzes the attachment of alanine to tRNA(Ala) in a two-step reaction: alanine is first activated by ATP to form Ala-AMP and then transferred to the acceptor end of tRNA(Ala). Also edits incorrectly charged Ser-tRNA(Ala) and Gly-tRNA(Ala) via its editing domain. This is Alanine--tRNA ligase from Streptococcus agalactiae serotype Ia (strain ATCC 27591 / A909 / CDC SS700).